We begin with the raw amino-acid sequence, 224 residues long: Thymidine kinase, cytosolic (224 aa).

Serine 13 is modified (phosphoserine). ATP contacts are provided by residues 26–33, 58–60, and 98–101; these read GPMFSGKS, DTR, and DEGQ. Glutamate 99 (proton acceptor) is an active-site residue. A substrate-binding site is contributed by phenylalanine 129. Zn(2+) is bound by residues cysteine 154 and cysteine 157. Residues 173–177 and tyrosine 182 contribute to the substrate site; that span reads VEVIG. Zn(2+) contacts are provided by cysteine 186 and cysteine 189. The KEN box signature appears at 203 to 205; it reads KEN.

It belongs to the thymidine kinase family. Homotetramer. Tetramerization from dimerization is induced by ATP and increases catalytic efficiency due to a high affinity for thymidine. Tetramerization is inhibited by phosphorylation at Ser-13. Interacts (via the KEN box) with FZR1. In terms of processing, phosphorylated on Ser-13 in mitosis. Phosphorylation of Ser-13 by CDK1 during mitosis reduces homotetramerization and catalytic efficiency when DNA replication is complete and intracellular TK1 is still present at a high level. Post-translationally, polyubiquitinated. Postmitosis, ubiquitination leads to proteasomal degradation. The KEN box sequence located at the C-terminal region targets for degradation by the anaphase promoting complex (APC/C) activated and rate-limited by FZR1.

It is found in the cytoplasm. The enzyme catalyses thymidine + ATP = dTMP + ADP + H(+). Cell-cycle-regulated enzyme of importance in nucleotide metabolism. Catalyzes the first enzymatic step in the salvage pathway converting thymidine into thymidine monophosphate. Transcriptional regulation limits expression to the S phase of the cell cycle and transient expression coincides with the oscillation in the intracellular dTTP concentration. This chain is Thymidine kinase, cytosolic (TK1), found in Gallus gallus (Chicken).